The sequence spans 356 residues: DNA polymerase IV (356 aa).

The UmuC domain maps to 1-188 (MDTSRKIIHI…IPVTKFYGVG (188 aa)). 2 residues coordinate Mg(2+): Asp-11 and Asp-106. The active site involves Glu-107.

The protein belongs to the DNA polymerase type-Y family. As to quaternary structure, monomer. Mg(2+) serves as cofactor.

It localises to the cytoplasm. The catalysed reaction is DNA(n) + a 2'-deoxyribonucleoside 5'-triphosphate = DNA(n+1) + diphosphate. In terms of biological role, poorly processive, error-prone DNA polymerase involved in untargeted mutagenesis. Copies undamaged DNA at stalled replication forks, which arise in vivo from mismatched or misaligned primer ends. These misaligned primers can be extended by PolIV. Exhibits no 3'-5' exonuclease (proofreading) activity. May be involved in translesional synthesis, in conjunction with the beta clamp from PolIII. This is DNA polymerase IV from Listeria monocytogenes serotype 4b (strain F2365).